A 243-amino-acid chain; its full sequence is UPF0246 protein gbs2036 (243 aa).

Belongs to the UPF0246 family.

This is UPF0246 protein gbs2036 from Streptococcus agalactiae serotype III (strain NEM316).